The sequence spans 347 residues: Haptoglobin (347 aa).

The N-terminal stretch at 1–18 (MRALGAVITLLLWGQLFA) is a signal peptide. Positions 31–88 (DSCPKPPEIANGYVEHLVRYQCKNYYRLRTEGDGVYALNSEKQWVNKAVGEQLPECEA) constitute a Sushi domain. Cystine bridges form between C52–C86 and C90–C207. The Peptidase S1 domain occupies 103–345 (IIGGSLDAKG…ILDWIQKTIA (243 aa)). Residues N148, N152, N182, N230, and N256 are each glycosylated (N-linked (GlcNAc...) asparagine). 2 disulfide bridges follow: C250–C281 and C292–C322. Positions 259–264 (VPENKI) are interaction with CD163.

The protein belongs to the peptidase S1 family. As to quaternary structure, tetramer of two alpha and two beta chains; disulfide-linked. The hemoglobin/haptoglobin complex is composed of a haptoglobin dimer bound to two hemoglobin alpha-beta dimers. Interacts with CD163. Interacts with ERGIC3. In terms of tissue distribution, expressed by the liver and secreted in plasma.

It is found in the secreted. Its function is as follows. As a result of hemolysis, hemoglobin is found to accumulate in the kidney and is secreted in the urine. Haptoglobin captures, and combines with free plasma hemoglobin to allow hepatic recycling of heme iron and to prevent kidney damage. Haptoglobin also acts as an antioxidant, has antibacterial activity and plays a role in modulating many aspects of the acute phase response. Hemoglobin/haptoglobin complexes are rapidly cleared by the macrophage CD163 scavenger receptor expressed on the surface of liver Kupfer cells through an endocytic lysosomal degradation pathway. This is Haptoglobin (HP) from Oryctolagus cuniculus (Rabbit).